A 477-amino-acid polypeptide reads, in one-letter code: ATP synthase subunit beta (477 aa).

155 to 162 provides a ligand contact to ATP; that stretch reads GGAGVGKT.

The protein belongs to the ATPase alpha/beta chains family. F-type ATPases have 2 components, CF(1) - the catalytic core - and CF(0) - the membrane proton channel. CF(1) has five subunits: alpha(3), beta(3), gamma(1), delta(1), epsilon(1). CF(0) has three main subunits: a(1), b(2) and c(9-12). The alpha and beta chains form an alternating ring which encloses part of the gamma chain. CF(1) is attached to CF(0) by a central stalk formed by the gamma and epsilon chains, while a peripheral stalk is formed by the delta and b chains.

It is found in the cell inner membrane. It carries out the reaction ATP + H2O + 4 H(+)(in) = ADP + phosphate + 5 H(+)(out). In terms of biological role, produces ATP from ADP in the presence of a proton gradient across the membrane. The catalytic sites are hosted primarily by the beta subunits. This is ATP synthase subunit beta from Mesorhizobium japonicum (strain LMG 29417 / CECT 9101 / MAFF 303099) (Mesorhizobium loti (strain MAFF 303099)).